The primary structure comprises 310 residues: Coproporphyrin III ferrochelatase (310 aa).

Histidine 184 and glutamate 265 together coordinate Fe(2+).

It belongs to the ferrochelatase family.

The protein localises to the cytoplasm. The enzyme catalyses Fe-coproporphyrin III + 2 H(+) = coproporphyrin III + Fe(2+). It functions in the pathway porphyrin-containing compound metabolism; protoheme biosynthesis. Its function is as follows. Involved in coproporphyrin-dependent heme b biosynthesis. Catalyzes the insertion of ferrous iron into coproporphyrin III to form Fe-coproporphyrin III. This Limosilactobacillus reuteri (strain DSM 20016) (Lactobacillus reuteri) protein is Coproporphyrin III ferrochelatase.